The following is a 394-amino-acid chain: Protein DDI1 homolog 2 (394 aa).

The region spanning 1-81 (MLITVYCVRR…VILRQRETPE (81 aa)) is the Ubiquitin-like domain. A disordered region spans residues 82–128 (ARPAAPFPGLDFSTIAVPGSSSQPAPSQPQAPPPPPPDTSSFPQGLD). Residues 107 to 119 (PSQPQAPPPPPPD) are compositionally biased toward pro residues. D247 is an active-site residue. A Ubiquitin-binding motif is present at residues 371 to 390 (EEIADRELAEVLQKSAEEAD).

It belongs to the DDI1 family. Homodimer.

Its subcellular location is the cytoplasm. It is found in the cytosol. The protein localises to the chromosome. Aspartic protease that mediates the cleavage of NFE2L1/NRF1 at 'Leu-104', thereby promoting release of NFE2L1/NRF1 from the endoplasmic reticulum membrane. Ubiquitination of NFE2L1/NRF1 is a prerequisite for cleavage, suggesting that DDI2 specifically recognizes and binds ubiquitinated NFE2L1/NRF1. Seems to act as a proteasomal shuttle which links the proteasome and replication fork proteins like RTF2. Required for cellular survival following replication stress. The protein is Protein DDI1 homolog 2 (ddi2) of Xenopus tropicalis (Western clawed frog).